The sequence spans 270 residues: 4-hydroxy-tetrahydrodipicolinate reductase (270 aa).

NAD(+) is bound by residues Gly-11–Met-16 and Glu-37. Residue Arg-38 coordinates NADP(+). Residues Gly-101 to Thr-103 and Ala-125 to Tyr-128 contribute to the NAD(+) site. The active-site Proton donor/acceptor is the His-158. His-159 provides a ligand contact to (S)-2,3,4,5-tetrahydrodipicolinate. The Proton donor role is filled by Lys-162. Gly-168–Thr-169 is a binding site for (S)-2,3,4,5-tetrahydrodipicolinate.

Belongs to the DapB family.

Its subcellular location is the cytoplasm. The enzyme catalyses (S)-2,3,4,5-tetrahydrodipicolinate + NAD(+) + H2O = (2S,4S)-4-hydroxy-2,3,4,5-tetrahydrodipicolinate + NADH + H(+). It catalyses the reaction (S)-2,3,4,5-tetrahydrodipicolinate + NADP(+) + H2O = (2S,4S)-4-hydroxy-2,3,4,5-tetrahydrodipicolinate + NADPH + H(+). The protein operates within amino-acid biosynthesis; L-lysine biosynthesis via DAP pathway; (S)-tetrahydrodipicolinate from L-aspartate: step 4/4. Functionally, catalyzes the conversion of 4-hydroxy-tetrahydrodipicolinate (HTPA) to tetrahydrodipicolinate. This chain is 4-hydroxy-tetrahydrodipicolinate reductase, found in Aeromonas salmonicida (strain A449).